We begin with the raw amino-acid sequence, 595 residues long: DNA damage-binding protein CMR1 (595 aa).

Residues 20–79 (ALLDSLGLDPAGASSPFGSSPAPTSNKTKPKPKPAPKKRKAAAVIAVDEGPRRRSGRIAG) are disordered. A compositionally biased stretch (low complexity) spans 29–46 (PAGASSPFGSSPAPTSNK). Residues 47-60 (TKPKPKPAPKKRKA) show a composition bias toward basic residues. WD repeat units lie at residues 185–226 (VTNE…MEKP), 255–297 (HAKN…ELFS), 300–339 (DEDLLINHFDLLPSAQEAWMVDKNGGISHWDTRESKRESG), and 349–389 (GRGA…SISS). The interval 397–429 (AIEEEEEGTSTLSGQSSSLPHDTHPTRESDYST) is disordered. Over residues 405–415 (TSTLSGQSSSL) the composition is skewed to low complexity. A compositionally biased stretch (basic and acidic residues) spans 417–426 (HDTHPTRESD). WD repeat units follow at residues 448–487 (QHGKSCSSAYWDPWGRRILTTSYDDHLRVFNIDPGSSLVD), 519–556 (LRAQWSLNMEYMPHFTVGNMKRTLDVVSATGEKIVGLW), and 558–595 (DDVTAVPTVTASHPNIVDRVVGGNTSGRIQLWSSGDHI).

The protein belongs to the WD repeat DDB2/WDR76 family.

In terms of biological role, DNA-binding protein that binds to both single- and double-stranded DNA. Binds preferentially to UV-damaged DNA. May be involved in DNA-metabolic processes. The chain is DNA damage-binding protein CMR1 from Cryptococcus neoformans var. neoformans serotype D (strain B-3501A) (Filobasidiella neoformans).